The sequence spans 304 residues: Non-specific ribonucleoside hydrolase RihC (304 aa).

H233 is an active-site residue.

Belongs to the IUNH family. RihC subfamily.

Hydrolyzes both purine and pyrimidine ribonucleosides with a broad-substrate specificity. This Escherichia coli (strain SE11) protein is Non-specific ribonucleoside hydrolase RihC.